We begin with the raw amino-acid sequence, 222 residues long: Small ribosomal subunit protein uS3 (222 aa).

The region spanning Ile-38–Lys-106 is the KH type-2 domain.

This sequence belongs to the universal ribosomal protein uS3 family. Part of the 30S ribosomal subunit. Forms a tight complex with proteins S10 and S14.

Its function is as follows. Binds the lower part of the 30S subunit head. Binds mRNA in the 70S ribosome, positioning it for translation. In Lactobacillus gasseri (strain ATCC 33323 / DSM 20243 / BCRC 14619 / CIP 102991 / JCM 1131 / KCTC 3163 / NCIMB 11718 / NCTC 13722 / AM63), this protein is Small ribosomal subunit protein uS3.